A 901-amino-acid polypeptide reads, in one-letter code: Aconitate hydratase A (901 aa).

Positions 443, 509, and 512 each coordinate [4Fe-4S] cluster.

It belongs to the aconitase/IPM isomerase family. In terms of assembly, monomer. [4Fe-4S] cluster serves as cofactor.

The enzyme catalyses citrate = D-threo-isocitrate. It carries out the reaction (2S,3R)-3-hydroxybutane-1,2,3-tricarboxylate = 2-methyl-cis-aconitate + H2O. It participates in carbohydrate metabolism; tricarboxylic acid cycle; isocitrate from oxaloacetate: step 2/2. It functions in the pathway organic acid metabolism; propanoate degradation. Its function is as follows. Involved in the catabolism of short chain fatty acids (SCFA) via the tricarboxylic acid (TCA)(acetyl degradation route) and probably the 2-methylcitrate cycle I (propionate degradation route). Catalyzes the reversible isomerization of citrate to isocitrate via cis-aconitate. Could catalyze the hydration of 2-methyl-cis-aconitate to yield (2R,3S)-2-methylisocitrate. The apo form of AcnA functions as a RNA-binding regulatory protein. The chain is Aconitate hydratase A (acnA) from Staphylococcus aureus (strain MRSA252).